Here is a 1188-residue protein sequence, read N- to C-terminus: Integrin alpha-11 (1188 aa).

Positions 1-22 (MDFPRGLLVAWTLSLWPGFTDT) are cleaved as a signal peptide. Residues 23–1141 (FNMDTRNPRV…ISKQEDWQVP (1119 aa)) lie on the Extracellular side of the membrane. 2 FG-GAP repeats span residues 24-85 (NMDT…NCTK) and 91-151 (VTLS…FSKT). An intrachain disulfide couples cysteine 76 to cysteine 83. 2 N-linked (GlcNAc...) asparagine glycosylation sites follow: asparagine 82 and asparagine 95. 2 cysteine pairs are disulfide-bonded: cysteine 121–cysteine 139 and cysteine 129–cysteine 159. Residues 164 to 345 (DIVIVLDGSN…AALKDIVDAL (182 aa)) enclose the VWFA domain. N-linked (GlcNAc...) asparagine glycans are attached at residues asparagine 291, asparagine 331, asparagine 358, asparagine 449, and asparagine 462. FG-GAP repeat units follow at residues 355–406 (TNKN…VIPH), 411–461 (LKEF…SMHN), 462–527 (NRSL…RFVY), 528–586 (NGTL…NILK), and 590–650 (QRIT…FEPS). Aspartate 488, asparagine 490, aspartate 492, and aspartate 496 together coordinate Ca(2+). An N-linked (GlcNAc...) asparagine glycan is attached at asparagine 528. Ca(2+)-binding residues include aspartate 551, asparagine 553, aspartate 555, aspartate 559, aspartate 613, asparagine 615, aspartate 617, and aspartate 621. N-linked (GlcNAc...) asparagine glycosylation is present at asparagine 642. 3 disulfide bridges follow: cysteine 659–cysteine 668, cysteine 674–cysteine 729, and cysteine 781–cysteine 787. Asparagine 694 carries N-linked (GlcNAc...) asparagine glycosylation. Asparagine 857 is a glycosylation site (N-linked (GlcNAc...) asparagine). A disulfide bond links cysteine 881 and cysteine 893. Residues asparagine 894, asparagine 973, asparagine 1031, asparagine 1039, and asparagine 1059 are each glycosylated (N-linked (GlcNAc...) asparagine). A helical membrane pass occupies residues 1142–1164 (IWIIVGSTLGGLLLLALLVLALW). Residues 1165–1188 (KLGFFKSAKRKREPGLGPIPKELK) are Cytoplasmic-facing.

The protein belongs to the integrin alpha chain family. In terms of assembly, heterodimer of an alpha and a beta subunit. Alpha-11 associates with beta-1. Interacts with RAB21.

It is found in the membrane. Integrin alpha-11/beta-1 is a receptor for collagen. In Mus musculus (Mouse), this protein is Integrin alpha-11 (Itga11).